We begin with the raw amino-acid sequence, 358 residues long: Endo-1,4-beta-xylanase B (358 aa).

Positions 1-17 (MRFSASLLLALTGSAAA) are cleaved as a signal peptide. One can recognise a GH10 domain in the interval 40 to 352 (QGLDAAMKAA…KAAYNAFLRG (313 aa)). A glycan (N-linked (GlcNAc...) asparagine) is linked at Asn-136. The Proton donor role is filled by Glu-166. Residue Glu-274 is the Nucleophile of the active site.

This sequence belongs to the glycosyl hydrolase 10 (cellulase F) family.

The protein localises to the secreted. It carries out the reaction Endohydrolysis of (1-&gt;4)-beta-D-xylosidic linkages in xylans.. Its pathway is glycan degradation; xylan degradation. Its activity is regulated as follows. Partial inhibition of activity is detected in the presence of Ag(+), Cu2(+) and SDS. Like most fungal xylanases, activity is completely inhibited by Hg(2+) since Hg(2+) could interact with tryptophan residues and oxidize the indole ring. Beta-mercaptoethanol enhances the enzymatic activity by counteracting the oxidation effects of the S-S linkage between cysteine residues. In terms of biological role, endo-1,4-beta-xylanase involved in the hydrolysis of xylan, a major structural heterogeneous polysaccharide found in plant biomass representing the second most abundant polysaccharide in the biosphere, after cellulose. Is more active on soluble wheat arabinoxylan (defined as 100%) than on birchwood xylan (75.4%) and beechwood xylan (70.8%), and less active on insoluble wheat arabinoxylan (17.4%). Xylose is the major hydrolysis product of XynB. The chain is Endo-1,4-beta-xylanase B from Humicola insolens (Soft-rot fungus).